Here is a 203-residue protein sequence, read N- to C-terminus: GTP-binding protein rho4 (203 aa).

21–28 contacts GTP; sequence GDGGCGKT. Positions 43 to 51 match the Effector region motif; the sequence is YVPTVFENY. 70-74 provides a ligand contact to GTP; that stretch reads DTAGQ. Cys-200 carries the cysteine methyl ester modification. Cys-200 carries the S-geranylgeranyl cysteine lipid modification. Residues 201-203 constitute a propeptide, removed in mature form; sequence VIL.

The protein belongs to the small GTPase superfamily. Rho family.

Its subcellular location is the membrane. In terms of biological role, required for cell separation. Involved in the regulation of the septum degradation during cytokinesis and in the organization of F-actin patches and cytoplasmic microtubules. The sequence is that of GTP-binding protein rho4 (rho4) from Schizosaccharomyces pombe (strain 972 / ATCC 24843) (Fission yeast).